Here is a 98-residue protein sequence, read N- to C-terminus: Cystatin-B (98 aa).

Position 1 is an N-acetylmethionine (Met-1). The Secondary area of contact motif lies at 46–50; the sequence is QIVAG.

It belongs to the cystatin family. In terms of tissue distribution, widely expressed. Highest expression in heart, liver and kidney. Lower levels in brain, lung and skeletal muscle. Lowest levels in spleen and testis.

It is found in the cytoplasm. Its function is as follows. This is an intracellular thiol proteinase inhibitor. The protein is Cystatin-B (Cstb) of Mus musculus (Mouse).